A 402-amino-acid chain; its full sequence is Subtilisin-like protease 9 (402 aa).

Residues 1 to 18 form the signal peptide; it reads MGFFRILFSLSLCALSLA. Positions 19–120 are excised as a propeptide; it reads IPSKLIGLEN…VEVDRVVKLD (102 aa). Positions 36 to 119 constitute an Inhibitor I9 domain; sequence SYIVVMKSAV…YVEVDRVVKL (84 aa). One can recognise a Peptidase S8 domain in the interval 130 to 402; sequence SWGLGRISHR…KKLLYNGSGA (273 aa). Residues aspartate 162 and histidine 193 each act as charge relay system in the active site. N-linked (GlcNAc...) asparagine glycosylation occurs at asparagine 254. Serine 348 functions as the Charge relay system in the catalytic mechanism. N-linked (GlcNAc...) asparagine glycans are attached at residues asparagine 390 and asparagine 398.

It belongs to the peptidase S8 family.

The protein localises to the secreted. Its function is as follows. Secreted subtilisin-like serine protease with keratinolytic activity that contributes to pathogenicity. This chain is Subtilisin-like protease 9 (SUB9), found in Arthroderma gypseum (strain ATCC MYA-4604 / CBS 118893) (Microsporum gypseum).